The primary structure comprises 177 residues: GTP-dependent dephospho-CoA kinase (177 aa).

Residues D48, V49, V50, D67, K69, E124, and D147 each coordinate GTP.

It belongs to the GTP-dependent DPCK family.

It catalyses the reaction 3'-dephospho-CoA + GTP = GDP + CoA + H(+). The protein operates within cofactor biosynthesis; coenzyme A biosynthesis. Functionally, catalyzes the GTP-dependent phosphorylation of the 3'-hydroxyl group of dephosphocoenzyme A to form coenzyme A (CoA). This Thermococcus onnurineus (strain NA1) protein is GTP-dependent dephospho-CoA kinase.